Reading from the N-terminus, the 312-residue chain is Pantothenate kinase (312 aa).

97-104 (GSVAVGKS) lines the ATP pocket.

This sequence belongs to the prokaryotic pantothenate kinase family.

The protein localises to the cytoplasm. It carries out the reaction (R)-pantothenate + ATP = (R)-4'-phosphopantothenate + ADP + H(+). Its pathway is cofactor biosynthesis; coenzyme A biosynthesis; CoA from (R)-pantothenate: step 1/5. This is Pantothenate kinase from Mycobacterium marinum (strain ATCC BAA-535 / M).